Here is a 325-residue protein sequence, read N- to C-terminus: D-alanine--D-alanine ligase (325 aa).

The ATP-grasp domain occupies 109–309; sequence KRVCKERMLP…FCTLLDQLIE (201 aa). Position 136–191 (136–191) interacts with ATP; it reads CRRLPFPMFVKPANLGSSVGISKAHDEQELEAAFSLAKQYDRKIIVERGIEGRELE. Mg(2+) contacts are provided by Asp262, Glu276, and Asn278.

It belongs to the D-alanine--D-alanine ligase family. It depends on Mg(2+) as a cofactor. The cofactor is Mn(2+).

It is found in the cytoplasm. The catalysed reaction is 2 D-alanine + ATP = D-alanyl-D-alanine + ADP + phosphate + H(+). It participates in cell wall biogenesis; peptidoglycan biosynthesis. Functionally, cell wall formation. This chain is D-alanine--D-alanine ligase, found in Solibacter usitatus (strain Ellin6076).